Here is a 512-residue protein sequence, read N- to C-terminus: Maturase K (512 aa).

It belongs to the intron maturase 2 family. MatK subfamily.

The protein resides in the plastid. It is found in the chloroplast. In terms of biological role, usually encoded in the trnK tRNA gene intron. Probably assists in splicing its own and other chloroplast group II introns. In Lemna aequinoctialis (Lesser duckweed), this protein is Maturase K.